A 227-amino-acid chain; its full sequence is Cytochrome c oxidase subunit 2 (227 aa).

Over 1 to 14 the chain is Mitochondrial intermembrane; that stretch reads MAHAVQYGFQDAAA. The helical transmembrane segment at 15 to 45 threads the bilayer; it reads PIMEELLYFHDHTLMIVFMISSLVLYIISLM. The Mitochondrial matrix portion of the chain corresponds to 46 to 59; the sequence is LSTELTHTSTMDAQ. The chain crosses the membrane as a helical span at residues 60–87; the sequence is EVETVWTILPAVILILIALPSLRILYMM. Residues 88–227 lie on the Mitochondrial intermembrane side of the membrane; it reads DEIETPSLTL…YFEEWLLKTL (140 aa). His161, Cys196, Glu198, Cys200, His204, and Met207 together coordinate Cu cation. Glu198 lines the Mg(2+) pocket. At Tyr218 the chain carries Phosphotyrosine.

It belongs to the cytochrome c oxidase subunit 2 family. In terms of assembly, component of the cytochrome c oxidase (complex IV, CIV), a multisubunit enzyme composed of 14 subunits. The complex is composed of a catalytic core of 3 subunits MT-CO1, MT-CO2 and MT-CO3, encoded in the mitochondrial DNA, and 11 supernumerary subunits COX4I, COX5A, COX5B, COX6A, COX6B, COX6C, COX7A, COX7B, COX7C, COX8 and NDUFA4, which are encoded in the nuclear genome. The complex exists as a monomer or a dimer and forms supercomplexes (SCs) in the inner mitochondrial membrane with NADH-ubiquinone oxidoreductase (complex I, CI) and ubiquinol-cytochrome c oxidoreductase (cytochrome b-c1 complex, complex III, CIII), resulting in different assemblies (supercomplex SCI(1)III(2)IV(1) and megacomplex MCI(2)III(2)IV(2)). Found in a complex with TMEM177, COA6, COX18, COX20, SCO1 and SCO2. Interacts with TMEM177 in a COX20-dependent manner. Interacts with COX20. Interacts with COX16. It depends on Cu cation as a cofactor.

It is found in the mitochondrion inner membrane. It carries out the reaction 4 Fe(II)-[cytochrome c] + O2 + 8 H(+)(in) = 4 Fe(III)-[cytochrome c] + 2 H2O + 4 H(+)(out). Component of the cytochrome c oxidase, the last enzyme in the mitochondrial electron transport chain which drives oxidative phosphorylation. The respiratory chain contains 3 multisubunit complexes succinate dehydrogenase (complex II, CII), ubiquinol-cytochrome c oxidoreductase (cytochrome b-c1 complex, complex III, CIII) and cytochrome c oxidase (complex IV, CIV), that cooperate to transfer electrons derived from NADH and succinate to molecular oxygen, creating an electrochemical gradient over the inner membrane that drives transmembrane transport and the ATP synthase. Cytochrome c oxidase is the component of the respiratory chain that catalyzes the reduction of oxygen to water. Electrons originating from reduced cytochrome c in the intermembrane space (IMS) are transferred via the dinuclear copper A center (CU(A)) of subunit 2 and heme A of subunit 1 to the active site in subunit 1, a binuclear center (BNC) formed by heme A3 and copper B (CU(B)). The BNC reduces molecular oxygen to 2 water molecules using 4 electrons from cytochrome c in the IMS and 4 protons from the mitochondrial matrix. The polypeptide is Cytochrome c oxidase subunit 2 (MT-CO2) (Galago senegalensis (Northern lesser bushbaby)).